The sequence spans 262 residues: MQVDLLSSAQSAHTLHLFHQHSPLVHCMTNDVVQTFTANTLLALGASPAMVIETEEASQFAAIASALLINVGTLTQPRAQAMRAAVEQAKSSQTPWTLDPVAVGALDYRRRFCLELLSHKPTAIRGNASEIMALAGVANGGRGVDTTDAAANAIPAAQTLARETGAIVVVTGEVDYVTDGHRIVGIHGGDPLMTKVVGTGCALSAVVAACCALPGDMLENVASACHWMKQAGERAVARSEGPGSFVPHFLDALWQLTQEVQA.

Position 50 (Met-50) interacts with substrate. The ATP site is built by Arg-125 and Thr-171. Substrate is bound at residue Gly-198.

Belongs to the Thz kinase family. Requires Mg(2+) as cofactor.

It catalyses the reaction 5-(2-hydroxyethyl)-4-methylthiazole + ATP = 4-methyl-5-(2-phosphooxyethyl)-thiazole + ADP + H(+). It participates in cofactor biosynthesis; thiamine diphosphate biosynthesis; 4-methyl-5-(2-phosphoethyl)-thiazole from 5-(2-hydroxyethyl)-4-methylthiazole: step 1/1. Catalyzes the phosphorylation of the hydroxyl group of 4-methyl-5-beta-hydroxyethylthiazole (THZ). The chain is Hydroxyethylthiazole kinase from Shigella boydii serotype 18 (strain CDC 3083-94 / BS512).